The sequence spans 536 residues: Caspase recruitment domain-containing protein 9 (536 aa).

Serine 2 is subject to Phosphoserine. Zn(2+) contacts are provided by aspartate 3, cysteine 10, and histidine 73. A CARD domain is found at 6–98 (NDDECWSALE…QLYRKVTGKE (93 aa)). Residues 99–116 (PARVFSMIIDASGESGLT) are linker. 2 coiled-coil regions span residues 117 to 277 (QLLM…HRNS) and 303 to 420 (SLRK…QLDM). Lysine 125 is covalently cross-linked (Glycyl lysine isopeptide (Lys-Gly) (interchain with G-Cter in ubiquitin)). Threonine 231 bears the Phosphothreonine mark. Residue serine 277 is modified to Phosphoserine. Phosphoserine occurs at positions 424, 425, 431, 451, 461, 483, and 498. The disordered stretch occupies residues 425 to 451 (SDLEDSSPRNSQELSLPQDLEEDAQLS). The disordered stretch occupies residues 472–536 (KHLSQTHDTV…GSDNTDTEGS (65 aa)). Positions 487-502 (PPEKERRRLKESFENY) are enriched in basic and acidic residues. Phosphothreonine; by CK2 occurs at positions 531 and 533.

As to quaternary structure, monomer. Homodimer; homodimerization is mediated by the CARD domain which forms an extensive interaction with the adjacent linker and coiled-coil regions; leads to an autoinhibited state. Homomultimer; polymerizes following activation, forming a nucleating helical template that seeds BCL10-filament formation via a CARD-CARD interaction. Interacts (via CARD domain) with BCL10 (via CARD domain); interaction takes place following CARD9 activation and polymerization, leading to the formation of a filamentous CBM complex assembly. Component of a CBM complex (CARD9-BCL10, MALT1), composed of CARD9, BCL10 and MALT1. Interacts with RASGRF1. Interacts with NOD2 (via NACHT domain); interaction is direct. Interacts with RIPK2. Interacts with VHL; without leading to protein degradation. Phosphorylated at Thr-231 by PRKCD downstream of C-type lectin receptors activation: phosphorylation promotes interaction with BCL10, followed by activation of NF-kappa-B and MAP kinase p38 pathways. Phosphorylated at Thr-531 and Thr-533 by CK2 following interaction with VHL, leading to inhibit the ability to activate NF-kappa-B. Post-translationally, ubiquitinated at Lys-125 via 'Lys-27'-linked ubiquitin by TRIM62 downstream of C-type lectin receptors activation; leading to CARD9 activation, followed by activation of NF-kappa-B and MAP kinase p38 pathways. Deubiquitinated at Lys-125 by USP15, inhibiting CARD9.

The protein localises to the cytoplasm. With respect to regulation, maintained in an autoinhibited state via homodimerization in which the CARD domain forms an extensive interaction with the adjacent linker and coiled-coil regions. Activation downstream of C-type lectin receptors, by phosphorylation by PRKCD and/or ubiquitination by TRIM62, triggers disruption of the CARD domain-coiled coil interface, CARD9 homooligomerization and BCL10 recruitment, followed by activation of NF-kappa-B and MAP kinase p38 pathways. Zinc-binding inhibits activation by stabilizing the CARD ground-state conformation and restricting its capacity to form BCL10-nucleating filaments. Adapter protein that plays a key role in innate immune response against fungi by forming signaling complexes downstream of C-type lectin receptors. CARD9-mediated signals are essential for antifungal immunity against a subset of fungi from the phylum Ascomycota. Transduces signals in myeloid cells downstream of C-type lectin receptors CLEC7A (dectin-1), CLEC6A (dectin-2) and CLEC4E (Mincle), which detect pathogen-associated molecular pattern metabolites (PAMPs), such as fungal carbohydrates, and trigger CARD9 activation. Upon activation, CARD9 homooligomerizes to form a nucleating helical template that recruits BCL10 via CARD-CARD interaction, thereby promoting polymerization of BCL10 and subsequent recruitment of MALT1: this leads to activation of NF-kappa-B and MAP kinase p38 (MAPK11, MAPK12, MAPK13 and/or MAPK14) pathways which stimulate expression of genes encoding pro-inflammatory cytokines and chemokines. CARD9 signaling in antigen-presenting cells links innate sensing of fungi to the activation of adaptive immunity and provides a cytokine milieu that induces the development and subsequent of interleukin 17-producing T helper (Th17) cells. Also involved in activation of myeloid cells via classical ITAM-associated receptors and TLR: required for TLR-mediated activation of MAPK, while it is not required for TLR-induced activation of NF-kappa-B. CARD9 can also be engaged independently of BCL10: forms a complex with RASGRF1 downstream of C-type lectin receptors, which recruits and activates HRAS, leading to ERK activation and the production of cytokines. Acts as an important regulator of the intestinal commensal fungi (mycobiota) component of the gut microbiota. Plays an essential role in antifungal immunity against dissemination of gut fungi: acts by promoting induction of antifungal IgG antibodies response in CX3CR1(+) macrophages to confer protection against disseminated C.albicans or C.auris infection. Also mediates immunity against other pathogens, such as certain bacteria, viruses and parasites; CARD9 signaling is however redundant with other innate immune responses. In response to L.monocytogenes infection, required for the production of inflammatory cytokines activated by intracellular peptidoglycan: acts by connecting NOD2 recognition of peptidoglycan to downstream activation of MAP kinases (MAPK) without activating NF-kappa-B. This is Caspase recruitment domain-containing protein 9 from Rattus norvegicus (Rat).